A 162-amino-acid polypeptide reads, in one-letter code: NADH-quinone oxidoreductase subunit I (162 aa).

4Fe-4S ferredoxin-type domains lie at 52–82 (LRRYPNGEERCIACKLCEAICPAQAITIEAG) and 93–122 (TRYDIDMVKCIYCGFCQEACPVDAIVEGPN). Positions 62, 65, 68, 72, 102, 105, 108, and 112 each coordinate [4Fe-4S] cluster.

It belongs to the complex I 23 kDa subunit family. In terms of assembly, NDH-1 is composed of 14 different subunits. Subunits NuoA, H, J, K, L, M, N constitute the membrane sector of the complex. The cofactor is [4Fe-4S] cluster.

It is found in the cell inner membrane. The enzyme catalyses a quinone + NADH + 5 H(+)(in) = a quinol + NAD(+) + 4 H(+)(out). Its function is as follows. NDH-1 shuttles electrons from NADH, via FMN and iron-sulfur (Fe-S) centers, to quinones in the respiratory chain. The immediate electron acceptor for the enzyme in this species is believed to be ubiquinone. Couples the redox reaction to proton translocation (for every two electrons transferred, four hydrogen ions are translocated across the cytoplasmic membrane), and thus conserves the redox energy in a proton gradient. This is NADH-quinone oxidoreductase subunit I from Xanthobacter autotrophicus (strain ATCC BAA-1158 / Py2).